The sequence spans 240 residues: Agamous-like MADS-box protein AGL16 (240 aa).

The 61-residue stretch at 1–61 (MGRGKIAIKR…GRLYDFSSSS (61 aa)) folds into the MADS-box domain. In terms of domain architecture, K-box spans 86-176 (IQFWQKEAAI…HKKVNLMHQQ (91 aa)).

As to quaternary structure, homodimer. Interacts with AGL15, AGL24, AP1, AGL6, AG, AGL1, AGL11, AGL5, SEP3, SEP1, AGL63, AGL14, SOC1 and AGL21. Interacts with AGL63. Interacts with SVP. Expressed at high levels in leaves, moderate levels in roots, seedlings and stems, and at low levels in flowers, pollen and siliques. Accumulates in leaf guard cells and trichomes. Also present in epidermal cells of roots. Expressed in mature guard cells.

Its subcellular location is the nucleus. In terms of biological role, probable transcription factor involved in the regulation of flowering time in long-day photoperiod. Participates in the repression of FT expression and floral transition, by interacting closely with the FLC-SVP pathways. Functions in the satellite meristemoid lineage of stomatal development. This Arabidopsis thaliana (Mouse-ear cress) protein is Agamous-like MADS-box protein AGL16 (AGL16).